The chain runs to 325 residues: Heat-inducible transcription repressor HrcA (325 aa).

The protein belongs to the HrcA family.

Its function is as follows. Negative regulator of class I heat shock genes (grpE-dnaK-dnaJ and groELS operons). Prevents heat-shock induction of these operons. The polypeptide is Heat-inducible transcription repressor HrcA (Staphylococcus aureus (strain USA300)).